Reading from the N-terminus, the 260-residue chain is Cytosolic Fe-S cluster assembly factor Nubp2 homolog (260 aa).

14 to 21 (GKGGVGKS) lines the ATP pocket. C188 and C191 together coordinate [4Fe-4S] cluster.

It belongs to the Mrp/NBP35 ATP-binding proteins family. NUBP2/CFD1 subfamily. In terms of assembly, heterotetramer of 2 Nubp1 and 2 Nubp2 chains. [4Fe-4S] cluster serves as cofactor.

Its subcellular location is the cytoplasm. Its function is as follows. Component of the cytosolic iron-sulfur (Fe/S) protein assembly (CIA) machinery. Required for maturation of extramitochondrial Fe-S proteins. The Nubp1-Nubp2 heterotetramer forms a Fe-S scaffold complex, mediating the de novo assembly of an Fe-S cluster and its transfer to target apoproteins. This Drosophila sechellia (Fruit fly) protein is Cytosolic Fe-S cluster assembly factor Nubp2 homolog.